A 431-amino-acid polypeptide reads, in one-letter code: Glutamate-1-semialdehyde 2,1-aminomutase (431 aa).

Position 265 is an N6-(pyridoxal phosphate)lysine (Lys-265).

This sequence belongs to the class-III pyridoxal-phosphate-dependent aminotransferase family. HemL subfamily. In terms of assembly, homodimer. Requires pyridoxal 5'-phosphate as cofactor.

The protein localises to the cytoplasm. The catalysed reaction is (S)-4-amino-5-oxopentanoate = 5-aminolevulinate. The protein operates within porphyrin-containing compound metabolism; protoporphyrin-IX biosynthesis; 5-aminolevulinate from L-glutamyl-tRNA(Glu): step 2/2. This chain is Glutamate-1-semialdehyde 2,1-aminomutase, found in Vibrio atlanticus (strain LGP32) (Vibrio splendidus (strain Mel32)).